Reading from the N-terminus, the 695-residue chain is Follicle-stimulating hormone receptor (695 aa).

A signal peptide spans 1–17; the sequence is MALLLVSLLAFMSLGSG. 2 disulfides stabilise this stretch: Cys18-Cys25 and Cys23-Cys32. The 29-residue stretch at 18–46 folds into the LRRNT domain; that stretch reads CHHRLCHCSNRVFLCQESKVTEIPSDLPR. Residues 18 to 366 lie on the Extracellular side of the membrane; the sequence is CHHRLCHCSN…EDIMGYNILR (349 aa). LRR repeat units lie at residues 49-72, 73-97, 98-118, 119-143, 144-169, 170-192, 193-216, 217-240, and 241-259; these read VELR…FGDL, EKIE…LPNL, HEIR…AFQN, LPNL…KIQS, LQKV…LGLS, SESV…AFNG, TQLD…VFQG, ASGP…GLEN, and LKKL…PSLE. N-linked (GlcNAc...) asparagine glycans are attached at residues Asn191 and Asn199. 4 disulfides stabilise this stretch: Cys275/Cys346, Cys276/Cys292, Cys276/Cys356, and Cys292/Cys338. N-linked (GlcNAc...) asparagine glycosylation is present at Asn293. Tyr335 is modified (sulfotyrosine). The helical transmembrane segment at 367–387 threads the bilayer; the sequence is VLIWFISILAITGNVAVLVVL. Over 388-398 the chain is Cytoplasmic; that stretch reads TTSQYKLTVPR. A helical membrane pass occupies residues 399–421; the sequence is FLMCNLAFADLCIGIYLLLIASV. Over 422–443 the chain is Extracellular; sequence DVHTRTLYHNYAIDWQTGAGCA. Cysteines 442 and 517 form a disulfide. Residues 444–465 form a helical membrane-spanning segment; that stretch reads DCWLFTVFASELSVYTLTAITL. The Cytoplasmic segment spans residues 466–485; sequence ERWHTITHAMQLDCKVQLRH. A helical transmembrane segment spans residues 486-508; sequence AASIMVIGWIFSSAAALFPIFGV. The Extracellular portion of the chain corresponds to 509–528; the sequence is SSYMKVSICLPMDIDSPLSQ. A helical transmembrane segment spans residues 529–550; the sequence is LYVMFLLVLNVLAFVVICGCYL. Topologically, residues 551–573 are cytoplasmic; sequence HIYLTVRNPNIVSSASDTRIAKR. A helical membrane pass occupies residues 574–597; it reads MATLIFTDFLCMAPISFFAISASL. Residues 598 to 608 lie on the Extracellular side of the membrane; it reads KVPLITVSKAK. A helical membrane pass occupies residues 609-630; the sequence is ILLVLFYPINSCANPFLYAIFT. At 631–695 the chain is on the cytoplasmic side; the sequence is KNFRRDLFIL…LAPLNHLAQN (65 aa). Residues 658-677 are disordered; it reads TSSTAHNSHPRNGHSSSVSR.

Belongs to the G-protein coupled receptor 1 family. FSH/LSH/TSH subfamily. As to quaternary structure, homotrimer. Functions as a homotrimer binding the FSH hormone heterodimer composed of CGA and FSHB. Interacts with ARRB2. Interacts with APPL2; interaction is independent of follicle stimulating hormone stimulation. In terms of processing, N-glycosylated; indirectly required for FSH-binding, possibly via a conformational change that allows high affinity binding of hormone. Sulfated.

It is found in the cell membrane. Functionally, g protein-coupled receptor for follitropin, the follicle-stimulating hormone. Through cAMP production activates the downstream PI3K-AKT and ERK1/ERK2 signaling pathways. The sequence is that of Follicle-stimulating hormone receptor (FSHR) from Cavia porcellus (Guinea pig).